The sequence spans 56 residues: Conotoxin Cal6.41c (56 aa).

The N-terminal stretch at 1–23 (MSGSGAMLLGLLILVAMATSLDT) is a signal peptide. Intrachain disulfides connect C27-C41, C33-C50, and C40-C54.

As to expression, expressed by the venom duct.

The protein localises to the secreted. Probable neurotoxin. This is Conotoxin Cal6.41c from Californiconus californicus (California cone).